Reading from the N-terminus, the 439-residue chain is Hydroxyornithine transacylase SID3 (439 aa).

Positions 437-439 (SKL) match the PTS1-type peroxisomal targeting signal motif.

The protein belongs to the lysine N-acyltransferase mbtK family.

The protein resides in the peroxisome. The protein operates within siderophore biosynthesis. Hydroxyornithine transacylase; part of the gene cluster that mediates the biosynthesis of hydroxamate-containing siderophores that play a critical role in virulence via intracellular iron acquisition during macrophage infection. In Ajellomyces capsulatus (Darling's disease fungus), this protein is Hydroxyornithine transacylase SID3.